Here is a 147-residue protein sequence, read N- to C-terminus: Large ribosomal subunit protein bL9 (147 aa).

Belongs to the bacterial ribosomal protein bL9 family.

Its function is as follows. Binds to the 23S rRNA. The polypeptide is Large ribosomal subunit protein bL9 (Bacteroides fragilis (strain ATCC 25285 / DSM 2151 / CCUG 4856 / JCM 11019 / LMG 10263 / NCTC 9343 / Onslow / VPI 2553 / EN-2)).